The chain runs to 546 residues: CTP synthase (546 aa).

An amidoligase domain region spans residues 1-269 (MNSNTKIIFV…DAKLVELLNL (269 aa)). Position 16 (Ser16) interacts with CTP. Ser16 serves as a coordination point for UTP. ATP is bound by residues 17–22 (SLGKGV) and Asp74. Residues Asp74 and Glu143 each contribute to the Mg(2+) site. Residues 150-152 (DIE), 190-195 (KTKPTQ), and Lys226 contribute to the CTP site. Residues 190 to 195 (KTKPTQ) and Lys226 contribute to the UTP site. In terms of domain architecture, Glutamine amidotransferase type-1 spans 294 to 546 (IIAMVGKYVS…IQAAIENSNN (253 aa)). Residue Gly356 coordinates L-glutamine. Cys383 serves as the catalytic Nucleophile; for glutamine hydrolysis. L-glutamine is bound by residues 384–387 (LGMQ), Glu407, and Arg474. Active-site residues include His519 and Glu521.

It belongs to the CTP synthase family. As to quaternary structure, homotetramer.

It carries out the reaction UTP + L-glutamine + ATP + H2O = CTP + L-glutamate + ADP + phosphate + 2 H(+). The catalysed reaction is L-glutamine + H2O = L-glutamate + NH4(+). It catalyses the reaction UTP + NH4(+) + ATP = CTP + ADP + phosphate + 2 H(+). The protein operates within pyrimidine metabolism; CTP biosynthesis via de novo pathway; CTP from UDP: step 2/2. Its activity is regulated as follows. Allosterically activated by GTP, when glutamine is the substrate; GTP has no effect on the reaction when ammonia is the substrate. The allosteric effector GTP functions by stabilizing the protein conformation that binds the tetrahedral intermediate(s) formed during glutamine hydrolysis. Inhibited by the product CTP, via allosteric rather than competitive inhibition. Its function is as follows. Catalyzes the ATP-dependent amination of UTP to CTP with either L-glutamine or ammonia as the source of nitrogen. Regulates intracellular CTP levels through interactions with the four ribonucleotide triphosphates. This is CTP synthase from Francisella tularensis subsp. holarctica (strain FTNF002-00 / FTA).